Here is a 156-residue protein sequence, read N- to C-terminus: Transcriptional repressor NrdR (156 aa).

A zinc finger lies at 3–34 (CPYCGETEDKVIDSRQGKEADVIRRRRECLSC). Positions 49-139 (LVIIKKDGRR…VYREFKHVND (91 aa)) constitute an ATP-cone domain.

Belongs to the NrdR family. Zn(2+) is required as a cofactor.

Negatively regulates transcription of bacterial ribonucleotide reductase nrd genes and operons by binding to NrdR-boxes. The chain is Transcriptional repressor NrdR from Desulfatibacillum aliphaticivorans.